Consider the following 600-residue polypeptide: Elongation factor 4 (600 aa).

Positions Lys-5 to Lys-187 constitute a tr-type G domain. GTP-binding positions include Asp-17–Thr-22 and Asn-134–Asp-137.

The protein belongs to the TRAFAC class translation factor GTPase superfamily. Classic translation factor GTPase family. LepA subfamily.

Its subcellular location is the cell inner membrane. It carries out the reaction GTP + H2O = GDP + phosphate + H(+). Its function is as follows. Required for accurate and efficient protein synthesis under certain stress conditions. May act as a fidelity factor of the translation reaction, by catalyzing a one-codon backward translocation of tRNAs on improperly translocated ribosomes. Back-translocation proceeds from a post-translocation (POST) complex to a pre-translocation (PRE) complex, thus giving elongation factor G a second chance to translocate the tRNAs correctly. Binds to ribosomes in a GTP-dependent manner. This chain is Elongation factor 4, found in Rickettsia akari (strain Hartford).